Reading from the N-terminus, the 658-residue chain is Transcription factor cep-1 (658 aa).

Residues Glu-238–Arg-428 mediate DNA binding. The Zn(2+) site is built by Cys-319, His-322, Cys-375, and Cys-379. The segment at Gln-450–Ser-477 is disordered. Low complexity predominate over residues Thr-466 to Ser-476. The required for tertiary structure stability of the protein stretch occupies residues Gln-535–Ile-564.

This sequence belongs to the p53 family. Homodimer. Interacts (via C-terminus domain) with prmt-5; not methylated by prmt-5. Interacts with cbp-1 (via HAT domain); cep-1 transcriptional activity may be inhibited by interaction with methylated cbp-1. Component of a complex that contains prmt-5 and cbp-1. Interacts with ape-1; the interaction inhibits pro-apoptotic activity of cep-1. The cofactor is Zn(2+). Post-translationally, phosphorylated in response to IR-induced DNA damage which is thought to be mediated by akt-1.

The protein resides in the nucleus. Transcriptional activator that binds the same DNA consensus sequence as p53. Has a role in normal development to ensure proper meiotic chromosome segregation. Promotes apoptosis under conditions of cellular and genotoxic stress in response to DNA damage, hypoxia, or starvation. However, not required for DNA repair in response to UV-C or to regulate cell-cycle progression. Regulates germline apoptosis in response to DNA damage. Required for induction of ced-13 in response to DNA damage. Its pro-apoptotic activity is inhibited when bound to ape-1 in vitro. Regulates germline proliferation by activating phg-1. Regulates DNA damage-induced apoptosis by inducing transcription of the programmed cell death activator egl-1. Negatively regulates lifespan. The sequence is that of Transcription factor cep-1 from Caenorhabditis briggsae.